The chain runs to 519 residues: Probable WRKY transcription factor 33 (519 aa).

Disordered regions lie at residues 1–34 (MAASFLTMDNSRTRQNMNGSANWSQQSGRTSTSS) and 123–212 (SSGV…CTFP). Residues 7-34 (TMDNSRTRQNMNGSANWSQQSGRTSTSS) show a composition bias toward polar residues. Residues 130–142 (TTTTTTTTTTTTT) are compositionally biased toward low complexity. A compositionally biased stretch (polar residues) spans 164-174 (TETRPNNQAVS). Basic and acidic residues predominate over residues 178–188 (REQRKGEDGYN). The segment at residues 178-242 (REQRKGEDGY…YKGSHNHPKP (65 aa)) is a DNA-binding region (WRKY 1). Zn(2+) contacts are provided by Cys209, Cys214, His237, and His239. Disordered stretches follow at residues 232 to 255 (VYKGSHNHPKPQSTRRSSSSSSTF) and 267 to 349 (NRQA…REPR). Residues 245 to 254 (TRRSSSSSST) are compositionally biased toward low complexity. Polar residues predominate over residues 269 to 299 (QASSDQPNSNNSFHQSDSFGMQQEDNTTSDS). The segment covering 323-332 (PEAKRWKGDN) has biased composition (basic and acidic residues). A DNA-binding region (WRKY 2) is located at residues 356–421 (SDIDILDDGY…YEGKHNHDVP (66 aa)). Zn(2+) is bound by residues Cys387, Cys392, His416, and His418.

Belongs to the WRKY group I family. Interacts with MKS1. Interacts with ATG18A. Interacts with SIB1 and SIB2. Interacts with VQ1 and VQ10. In terms of processing, phosphorylated by MPK4. Phosphorylated on serine residues by MPK3 and MPK6 following infection with the necrotrophic fungal pathogen B.cinerea. Highly expressed in roots, leaves and flowers, and at lower levels in stems, siliques and seeds.

The protein localises to the nucleus. Transcription factor. Interacts specifically with the W box (5'-TTGAC[CT]-3'), a frequently occurring elicitor-responsive cis-acting element. Involved in defense responses. Required for resistance to the necrotrophic fungal pathogen B.cinerea. Regulates the antagonistic relationship between defense pathways mediating responses to the bacterial pathogen P. syringae and the necrotrophic pathogen B.cinerea. Required for the phytoalexin camalexin synthesis following infection with B.cinerea. Acts as a positive regulator of the camalexin biosynthetic genes PAD3 (CYP71B15) and CYP71A13 by binding to their promoters. Acts downstream of MPK3 and MPK6 in reprogramming the expression of camalexin biosynthetic genes, which drives the metabolic flow to camalexin production. Functions with WRKY25 as positive regulator of salt stress response and abscisic acid (ABA) signaling. Functions with WRKY25 and WRKY26 as positive regulator of plant thermotolerance by partially participating in ethylene-response signal transduction pathway. The DNA-binding activity of WRKY33 is increased by SIB1 and SIB2. The polypeptide is Probable WRKY transcription factor 33 (WRKY33) (Arabidopsis thaliana (Mouse-ear cress)).